We begin with the raw amino-acid sequence, 1310 residues long: Major viral transcription factor ICP4 homolog (1310 aa).

Disordered regions lie at residues 117 to 271 (AGAR…GPVE), 285 to 454 (GAKA…TPII), and 636 to 697 (GSSP…LLDK). Residues 341 to 350 (PVEKKPKSRE) are compositionally biased toward basic and acidic residues. Low complexity-rich tracts occupy residues 351 to 364 (FVSS…WGSS), 392 to 407 (PSPS…DGGS), and 648 to 666 (PSPT…SAAA). A Nuclear localization signal motif is present at residues 677–685 (RLRTPRKRK). A phosphoserine; by viral VZV ORF66 mark is found at Ser-686 and Ser-722. Disordered regions lie at residues 1193 to 1258 (GTRF…SFGV) and 1282 to 1310 (ELLS…QSRG). Residues 1217-1227 (RTADDREHALE) show a composition bias toward basic and acidic residues. Positions 1228–1250 (LDDWEVGCEDAWDSEEGGGDDGD) are enriched in acidic residues.

It belongs to the herpesviridae ICP4 family. As to quaternary structure, interacts with IE4 and IE63. Interacts with host USF1 and SP1. Phosphorylated by ORF66 protein kinase on Ser-686 and Ser-722. Also phosphorylated by ORF47 protein kinase and by human CSNK2A1/CKII.

The protein resides in the host nucleus. Its subcellular location is the host cytoplasm. It localises to the virion tegument. Functionally, transcriptional transactivator. May interact with and recruit specific components of the general transcription machinery to viral promoters and stabilize their formation for transcription initiation. Negatively regulates its own transcription. This immediate early (EI) protein may be necessary in virion for viral pathogenesis. The polypeptide is Major viral transcription factor ICP4 homolog (Homo sapiens (Human)).